A 698-amino-acid chain; its full sequence is Ion-translocating oxidoreductase complex subunit C (698 aa).

4Fe-4S ferredoxin-type domains lie at 366–397 (TEMG…QQLY) and 407–436 (KARN…VQYY). [4Fe-4S] cluster-binding residues include cysteine 377, cysteine 380, cysteine 383, cysteine 387, cysteine 416, cysteine 419, cysteine 422, and cysteine 426.

This sequence belongs to the 4Fe4S bacterial-type ferredoxin family. RnfC subfamily. In terms of assembly, the complex is composed of six subunits: RnfA, RnfB, RnfC, RnfD, RnfE and RnfG. The cofactor is [4Fe-4S] cluster.

It is found in the cell inner membrane. Functionally, part of a membrane-bound complex that couples electron transfer with translocation of ions across the membrane. The polypeptide is Ion-translocating oxidoreductase complex subunit C (Yersinia pseudotuberculosis serotype O:1b (strain IP 31758)).